Reading from the N-terminus, the 1048-residue chain is MPITSSPDLFYLNDCDVVYWYDLTRLVCHYVNLTERDLLANEREKFLTSLDLLTAQITYVYMLFRNLRLVEDSFKKTLKKLIYTLSRFSINANIWFHSTLFEEREAIASQKDPERRSPLLQSILGTFQKFHFLLRLLHFLSNPNELTILPQLTPRFFKDSFNTISWNNPFLRKRLNQHMSHDLPRQMIKAVAGASGIVAENIDEIPASKQGTSCSSETSHHSPSAPFQRRRRGTIFSNVSGSSDESDTIWSKRKKPYPLNEETLSLVRARKKQLDGKLKQMIKSANEYLSNTANFSKMLNFEMNFKTYEEVSGTIPIIDILENLDLTIFLNLRELGDENRVFDEDVAIDDEDEEFLKHSLSSLSYILSDYFNMKQYFHDVVVKFIIVAQHLTLEDPFVFSPMQNDLPTGYYEPMKPSSLNLDNAKDKKNGSQNTDIQEEEDEYEPDPDSLILFHNLINQDSDFNDLKFFNLAHVFKKSCDDYFDVLKLAIEFVNQLILERENLLNYAARMMKNNITELLLRGEEGYGSYDGGETAEKSDTNAVYADSDTKDNDEWRDSQVKLPRYLQREYDSELIWGSNNRIKGGSKHALISYLTDNEKKDLFFDITFLITFRSIFTTTEFLSYLISQYNLDPPEDLCFEEYNEWVTKKLIPVKCRVVEIMTTFFKQYWFLGYDEPDLATLNLDYFAQVAIKENITGSVELLKEVNQKFKHGNIQEATAPMKTLDQQICQDHYSGTLYSTTESILAVDPVLFATQLTILEHEIYCEITIFDCLQKIWKNKYTKSYGASPGLNEFISFANKLTNFISYSVVKEADKSKRAKLLSHFIFIAEYCRKFNNFSSMTAIISALYSSPIYRLEKTWQAVIPQTRDLLQSLNKLMDPKKNFINYRNELKSLHSAPCVPFFGVYLSDLTFTDSGNPDYLVLEHGLKGVHDEKKYINFNKRSRLVDILQEIIYFKKTHYDFTKDRTVIECISNSLENIPHIEKQYQLSLIIEPKPRKKVVPNSNSNNKSQEKSRDDQTDEGKTSTKKDRFPKFQLHKTKKKAPKVSK.

2 disordered regions span residues 208 to 242 and 419 to 444; these read SKQG…VSGS and LNLD…DEYE. A compositionally biased stretch (low complexity) spans 212-224; that stretch reads TSCSSETSHHSPS. The 133-residue stretch at 578–710 folds into the N-terminal Ras-GEF domain; it reads SNNRIKGGSK…LLKEVNQKFK (133 aa). Positions 748–995 constitute a Ras-GEF domain; sequence DPVLFATQLT…YQLSLIIEPK (248 aa). A disordered region spans residues 997 to 1048; sequence RKKVVPNSNSNNKSQEKSRDDQTDEGKTSTKKDRFPKFQLHKTKKKAPKVSK. The segment covering 1010–1032 has biased composition (basic and acidic residues); the sequence is SQEKSRDDQTDEGKTSTKKDRFP. Residues 1035–1048 are compositionally biased toward basic residues; that stretch reads QLHKTKKKAPKVSK.

Its function is as follows. Promotes the exchange of Ras-bound GDP by GTP. This is Putative truncated guanine nucleotide exchange factor SDC25 (SDC25) from Saccharomyces cerevisiae (strain ATCC 204508 / S288c) (Baker's yeast).